A 28-amino-acid chain; its full sequence is uncharacterized protein (28 aa).

This is an uncharacterized protein from Archaeoglobus fulgidus (strain ATCC 49558 / DSM 4304 / JCM 9628 / NBRC 100126 / VC-16).